Reading from the N-terminus, the 97-residue chain is uncharacterized protein (97 aa).

The interval S58–S97 is disordered.

This is an uncharacterized protein from Homo sapiens (Human).